The following is a 1196-amino-acid chain: uncharacterized protein (1196 aa).

A helical transmembrane segment spans residues 27–47 (ILLLLGSFILLNVWINVVTLL). 7 disordered regions span residues 150–345 (GGGE…PQAH), 367–402 (SSVP…ASAP), 669–762 (TQDS…QKNT), 775–806 (CLTQ…DSGI), 826–877 (QATD…QDSE), 960–1009 (YRSS…GPYK), and 1168–1196 (KCEA…DIRM). A compositionally biased stretch (polar residues) spans 157–177 (VTASKAQASLLSRPETSSQFP). Low complexity-rich tracts occupy residues 212 to 227 (HSPT…HPWT) and 253 to 279 (THSQ…TPAH). Over residues 299 to 321 (HTSAQAQTHSPPHTPEYTHSQAH) the composition is skewed to polar residues. The span at 391–402 (APTPAPVPASAP) shows a compositional bias: pro residues. Polar residues-rich tracts occupy residues 733-742 (YLCQNPSPSQ), 750-762 (SGIT…QKNT), 787-804 (PFTQ…TQDS), and 826-849 (QATD…TGNV). Basic and acidic residues predominate over residues 962–971 (SSEHSQDSNL).

It is found in the membrane. This is an uncharacterized protein from Homo sapiens (Human).